The primary structure comprises 215 residues: 3-isopropylmalate dehydratase small subunit (215 aa).

The protein belongs to the LeuD family. LeuD type 1 subfamily. In terms of assembly, heterodimer of LeuC and LeuD.

The catalysed reaction is (2R,3S)-3-isopropylmalate = (2S)-2-isopropylmalate. It functions in the pathway amino-acid biosynthesis; L-leucine biosynthesis; L-leucine from 3-methyl-2-oxobutanoate: step 2/4. Its function is as follows. Catalyzes the isomerization between 2-isopropylmalate and 3-isopropylmalate, via the formation of 2-isopropylmaleate. The protein is 3-isopropylmalate dehydratase small subunit of Xylella fastidiosa (strain M23).